Here is a 70-residue protein sequence, read N- to C-terminus: Conotoxin Im11.11 (70 aa).

An N-terminal signal peptide occupies residues 1–25 (MFRLTSVGCILLVIAFLNLVGLTNA). 4 cysteine pairs are disulfide-bonded: Cys-26/Cys-40, Cys-33/Cys-45, Cys-39/Cys-49, and Cys-44/Cys-53. Position 56 is a proline amide (Pro-56). Residues 60-70 (TRLQGFFKHRR) constitute a propeptide that is removed on maturation.

This sequence belongs to the conotoxin I2 superfamily. Expressed by the venom duct.

It localises to the secreted. Probable neurotoxin. The polypeptide is Conotoxin Im11.11 (Conus imperialis (Imperial cone)).